A 506-amino-acid polypeptide reads, in one-letter code: MEFYYFLYLAFLLFCFILSKTTKKFGQNSQYSNHDELPPGPPQIPILGNAHQLSGGHTHHILRDLAKKYGPLMHLKIGEVSTIVASSPQIAEEIFRTHDILFADRPSNLESFKIVSYDFSDMVVSPYGNYWRQLRKISMMELLSQKSVQSFRSIREEEVLNFIKSIGSKEGTRINLSKEISLLIYGITTRAAFGEKNKNTEEFIRLLDQLTKAVAEPNIADMFPSLKFLQLISTSKYKIEKIHKQFDVIVETILKGHKEKINKPLSQENGEKKEDLVDVLLNIQRRNDFEAPLGDKNIKAIIFNIFSAGTETSSTTVDWAMCEMIKNPTVMKKAQEEVRKVFNEEGNVDETKLHQLKYLQAVIKETLRLHPPVPLLLPRECREQCKIKGYTIPSKSRVIVNAWAIGRDPNYWIEPEKFNPDRFLESKVDFKGNSFEYLPFGGGRRICPGITFALANIELPLAQLLFHFDWQSNTEKLNMKESRGVTVRREDDLYLTPVNFSSSSPA.

A helical membrane pass occupies residues 1–21 (MEFYYFLYLAFLLFCFILSKT). C447 is a heme binding site.

The protein belongs to the cytochrome P450 family. The cofactor is heme. Predominantly expressed in young leaves of mature plants. Low expression in roots and flowers, but not detected in stems and old leaves. Found predominantly in leaf epidermis. Barely detected in roots, internodes, young and mature leaves, and flower buds, but relatively abundant in fully developed flowers. Not detected in leaf epidermal cells.

It is found in the endoplasmic reticulum membrane. It carries out the reaction (-)-tabersonine + reduced [NADPH--hemoprotein reductase] + O2 = 16-hydroxytabersonine + oxidized [NADPH--hemoprotein reductase] + H2O + H(+). It functions in the pathway alkaloid biosynthesis; vindoline biosynthesis. Its function is as follows. Involved in the flower biosynthesis of vindoline, a precursor of vinblastine and vincristine. Hydroxylates specifically tabersonine, 2,3-dihydrotabersonine and 2,3-dihydro-3-hydroxytabersonine, but has no activity with naringenin, tryptamine, secologanin, strictosidine, ajmalicine, vindoline and catharanthine. This is Tabersonine 16-hydroxylase 1 from Catharanthus roseus (Madagascar periwinkle).